A 268-amino-acid polypeptide reads, in one-letter code: 4-hydroxy-tetrahydrodipicolinate reductase (268 aa).

NAD(+)-binding positions include 10 to 15, D36, 99 to 101, and 123 to 126; these read GASGRM, GTT, and APNM. H156 functions as the Proton donor/acceptor in the catalytic mechanism. H157 serves as a coordination point for (S)-2,3,4,5-tetrahydrodipicolinate. Catalysis depends on K160, which acts as the Proton donor. 166-167 lines the (S)-2,3,4,5-tetrahydrodipicolinate pocket; the sequence is GT.

This sequence belongs to the DapB family.

The protein localises to the cytoplasm. It carries out the reaction (S)-2,3,4,5-tetrahydrodipicolinate + NAD(+) + H2O = (2S,4S)-4-hydroxy-2,3,4,5-tetrahydrodipicolinate + NADH + H(+). It catalyses the reaction (S)-2,3,4,5-tetrahydrodipicolinate + NADP(+) + H2O = (2S,4S)-4-hydroxy-2,3,4,5-tetrahydrodipicolinate + NADPH + H(+). It functions in the pathway amino-acid biosynthesis; L-lysine biosynthesis via DAP pathway; (S)-tetrahydrodipicolinate from L-aspartate: step 4/4. Its function is as follows. Catalyzes the conversion of 4-hydroxy-tetrahydrodipicolinate (HTPA) to tetrahydrodipicolinate. In Janthinobacterium sp. (strain Marseille) (Minibacterium massiliensis), this protein is 4-hydroxy-tetrahydrodipicolinate reductase.